Here is a 338-residue protein sequence, read N- to C-terminus: Ketol-acid reductoisomerase (NADP(+)) (338 aa).

Residues 1-181 enclose the KARI N-terminal Rossmann domain; that stretch reads MKVFYDKDCD…GGGKGGIIET (181 aa). NADP(+) is bound by residues 24-27, Arg47, and Ser52; that span reads YGSQ. Residue His107 is part of the active site. Gly133 is an NADP(+) binding site. The 146-residue stretch at 182-327 folds into the KARI C-terminal knotted domain; sequence NFKEETETDL…GQLRAMMPWI (146 aa). Mg(2+) is bound by residues Asp190, Glu194, Glu226, and Glu230. A substrate-binding site is contributed by Ser251.

The protein belongs to the ketol-acid reductoisomerase family. Mg(2+) serves as cofactor.

It carries out the reaction (2R)-2,3-dihydroxy-3-methylbutanoate + NADP(+) = (2S)-2-acetolactate + NADPH + H(+). It catalyses the reaction (2R,3R)-2,3-dihydroxy-3-methylpentanoate + NADP(+) = (S)-2-ethyl-2-hydroxy-3-oxobutanoate + NADPH + H(+). Its pathway is amino-acid biosynthesis; L-isoleucine biosynthesis; L-isoleucine from 2-oxobutanoate: step 2/4. It functions in the pathway amino-acid biosynthesis; L-valine biosynthesis; L-valine from pyruvate: step 2/4. Functionally, involved in the biosynthesis of branched-chain amino acids (BCAA). Catalyzes an alkyl-migration followed by a ketol-acid reduction of (S)-2-acetolactate (S2AL) to yield (R)-2,3-dihydroxy-isovalerate. In the isomerase reaction, S2AL is rearranged via a Mg-dependent methyl migration to produce 3-hydroxy-3-methyl-2-ketobutyrate (HMKB). In the reductase reaction, this 2-ketoacid undergoes a metal-dependent reduction by NADPH to yield (R)-2,3-dihydroxy-isovalerate. The chain is Ketol-acid reductoisomerase (NADP(+)) from Delftia acidovorans (strain DSM 14801 / SPH-1).